The primary structure comprises 81 residues: uncharacterized protein (81 aa).

Helical transmembrane passes span 27–47 (ASLLFFGQTILFVFLSYLNLT) and 54–74 (IFGAYLTIFFAGFTYYSIFIM).

The protein resides in the cell membrane. This is an uncharacterized protein from Bacillus subtilis (strain 168).